A 590-amino-acid chain; its full sequence is Tape measure protein (590 aa).

Disordered stretches follow at residues 1 to 35 (MKKP…LSGL), 147 to 185 (ESVG…EEKQ), and 515 to 535 (LKKN…EAKQ). Basic and acidic residues predominate over residues 176-185 (PKQESPEEKQ).

The protein localises to the virion. Functionally, serves as a base for tail tube protein polymerization and acts as a template for tail length determination. This chain is Tape measure protein (29), found in Escherichia coli (Bacteriophage T4).